Consider the following 267-residue polypeptide: FCS-Like Zinc finger 8 (267 aa).

2 disordered regions span residues Met1 to Pro29 and Asp124 to Arg156. 2 stretches are compositionally biased toward polar residues: residues Glu15 to Thr28 and Pro126 to Pro141. Residues Ser221 to Asp265 form an FLZ-type zinc finger.

This sequence belongs to the FLZ family. In terms of assembly, interacts with KIN10 and KIN11 via its FLZ-type zinc finger domain. Interacts with KINB1, KINB2, KINB3 and SNF4 via its N-terminal part. Interacts with HB21/ZHD3.

In terms of biological role, may act as an adapter to facilitate the interaction of SnRK1 complex with effector proteins, conferring tissue- and stimulus-type specific differences in the SnRK1 regulation pathway. This Arabidopsis thaliana (Mouse-ear cress) protein is FCS-Like Zinc finger 8.